A 344-amino-acid chain; its full sequence is Anthranilate phosphoribosyltransferase (344 aa).

Residues G86, 89–90 (GD), T94, 96–99 (NIST), 114–122 (KHGNKSASG), and S126 contribute to the 5-phospho-alpha-D-ribose 1-diphosphate site. G86 serves as a coordination point for anthranilate. S98 is a binding site for Mg(2+). Anthranilate is bound at residue N117. Position 172 (R172) interacts with anthranilate. Mg(2+) is bound by residues D231 and E232.

This sequence belongs to the anthranilate phosphoribosyltransferase family. As to quaternary structure, homodimer. The cofactor is Mg(2+).

It catalyses the reaction N-(5-phospho-beta-D-ribosyl)anthranilate + diphosphate = 5-phospho-alpha-D-ribose 1-diphosphate + anthranilate. It functions in the pathway amino-acid biosynthesis; L-tryptophan biosynthesis; L-tryptophan from chorismate: step 2/5. Functionally, catalyzes the transfer of the phosphoribosyl group of 5-phosphorylribose-1-pyrophosphate (PRPP) to anthranilate to yield N-(5'-phosphoribosyl)-anthranilate (PRA). In Prochlorococcus marinus (strain AS9601), this protein is Anthranilate phosphoribosyltransferase.